The sequence spans 431 residues: Glucose-1-phosphate adenylyltransferase (431 aa).

Alpha-D-glucose 1-phosphate-binding positions include Y109, G175, 190–191 (EK), and S208.

It belongs to the bacterial/plant glucose-1-phosphate adenylyltransferase family. As to quaternary structure, homotetramer.

It catalyses the reaction alpha-D-glucose 1-phosphate + ATP + H(+) = ADP-alpha-D-glucose + diphosphate. The protein operates within glycan biosynthesis; glycogen biosynthesis. Functionally, involved in the biosynthesis of ADP-glucose, a building block required for the elongation reactions to produce glycogen. Catalyzes the reaction between ATP and alpha-D-glucose 1-phosphate (G1P) to produce pyrophosphate and ADP-Glc. This chain is Glucose-1-phosphate adenylyltransferase, found in Alteromonas mediterranea (strain DSM 17117 / CIP 110805 / LMG 28347 / Deep ecotype).